Consider the following 522-residue polypeptide: ATP synthase subunit alpha, mitochondrial (522 aa).

An ATP-binding site is contributed by 172 to 179; the sequence is GDRQTGKT.

This sequence belongs to the ATPase alpha/beta chains family. F-type ATPases have 2 components, CF(1) - the catalytic core - and CF(0) - the membrane proton channel. CF(1) has five subunits: alpha(3), beta(3), gamma(1), delta(1), epsilon(1). CF(0) has three main subunits: a, b and c.

The protein resides in the mitochondrion. The protein localises to the mitochondrion inner membrane. Functionally, mitochondrial membrane ATP synthase (F(1)F(0) ATP synthase or Complex V) produces ATP from ADP in the presence of a proton gradient across the membrane which is generated by electron transport complexes of the respiratory chain. F-type ATPases consist of two structural domains, F(1) - containing the extramembraneous catalytic core, and F(0) - containing the membrane proton channel, linked together by a central stalk and a peripheral stalk. During catalysis, ATP synthesis in the catalytic domain of F(1) is coupled via a rotary mechanism of the central stalk subunits to proton translocation. Subunits alpha and beta form the catalytic core in F(1). Rotation of the central stalk against the surrounding alpha(3)beta(3) subunits leads to hydrolysis of ATP in three separate catalytic sites on the beta subunits. Subunit alpha does not bear the catalytic high-affinity ATP-binding sites. The protein is ATP synthase subunit alpha, mitochondrial (ATP1) of Acanthamoeba castellanii (Amoeba).